Reading from the N-terminus, the 387-residue chain is ATP phosphoribosyltransferase regulatory subunit (387 aa).

The protein belongs to the class-II aminoacyl-tRNA synthetase family. HisZ subfamily. Heteromultimer composed of HisG and HisZ subunits.

Its subcellular location is the cytoplasm. Its pathway is amino-acid biosynthesis; L-histidine biosynthesis; L-histidine from 5-phospho-alpha-D-ribose 1-diphosphate: step 1/9. Required for the first step of histidine biosynthesis. May allow the feedback regulation of ATP phosphoribosyltransferase activity by histidine. This is ATP phosphoribosyltransferase regulatory subunit from Ralstonia pickettii (strain 12J).